A 742-amino-acid chain; its full sequence is Protein CdcH (742 aa).

ATP is bound by residues 230–237 and 503–510; these read GPPGTGKT. A disordered region spans residues 722-742; it reads FKGSQGPNVNSRQGSEHIGFQ. Residues 723 to 734 are compositionally biased toward polar residues; that stretch reads KGSQGPNVNSRQ.

This sequence belongs to the AAA ATPase family. CDC48 subfamily.

May be part of a transduction pathway connecting light to cell division. The protein is Protein CdcH (cdcH) of Halobacterium salinarum (strain ATCC 700922 / JCM 11081 / NRC-1) (Halobacterium halobium).